The chain runs to 379 residues: Dual-specificity RNA methyltransferase RlmN (379 aa).

The active-site Proton acceptor is E95. In terms of domain architecture, Radical SAM core spans 101–345 (EETRGTLCVS…TTVRKTRGDD (245 aa)). An intrachain disulfide couples C108 to C350. C115, C119, and C122 together coordinate [4Fe-4S] cluster. S-adenosyl-L-methionine is bound by residues 176–177 (GE), S208, 230–232 (SLH), and N307. The active-site S-methylcysteine intermediate is C350.

It belongs to the radical SAM superfamily. RlmN family. [4Fe-4S] cluster serves as cofactor.

Its subcellular location is the cytoplasm. The catalysed reaction is adenosine(2503) in 23S rRNA + 2 reduced [2Fe-2S]-[ferredoxin] + 2 S-adenosyl-L-methionine = 2-methyladenosine(2503) in 23S rRNA + 5'-deoxyadenosine + L-methionine + 2 oxidized [2Fe-2S]-[ferredoxin] + S-adenosyl-L-homocysteine. It catalyses the reaction adenosine(37) in tRNA + 2 reduced [2Fe-2S]-[ferredoxin] + 2 S-adenosyl-L-methionine = 2-methyladenosine(37) in tRNA + 5'-deoxyadenosine + L-methionine + 2 oxidized [2Fe-2S]-[ferredoxin] + S-adenosyl-L-homocysteine. In terms of biological role, specifically methylates position 2 of adenine 2503 in 23S rRNA and position 2 of adenine 37 in tRNAs. m2A2503 modification seems to play a crucial role in the proofreading step occurring at the peptidyl transferase center and thus would serve to optimize ribosomal fidelity. The sequence is that of Dual-specificity RNA methyltransferase RlmN from Burkholderia lata (strain ATCC 17760 / DSM 23089 / LMG 22485 / NCIMB 9086 / R18194 / 383).